The chain runs to 381 residues: Peptidoglycan transport system permease protein YejE (381 aa).

Transmembrane regions (helical) follow at residues 38–58 (YWSF…EFIA), 183–203 (VLFG…AGAI), 230–250 (ILLI…GIML), 292–312 (LLPN…SGSI), and 347–367 (WLGL…IFVG). One can recognise an ABC transmembrane type-1 domain in the interval 179 to 371 (FRISVLFGLT…LLIFVGEAVR (193 aa)).

Belongs to the binding-protein-dependent transport system permease family. In terms of assembly, the complex is composed of one ATP-binding protein (YejF), two transmembrane proteins (YejB and YejE) and a solute-binding protein (YepA or YejA).

The protein localises to the cell inner membrane. In terms of biological role, part of the ABC transporter complex YejBEF-YepA involved in the uptake of muropeptides, the breakdown products of cell wall peptidoglycan. The import of muropeptides into the cell enables peptidoglycan recycling, which is vital for cell wall integrity in this bacterium. Is also probably part of the ABC transporter complex YejABEF, which is likely involved in broad-spectrum peptide import. Responsible for the translocation of the substrate across the membrane. The sequence is that of Peptidoglycan transport system permease protein YejE from Agrobacterium fabrum (strain C58 / ATCC 33970) (Agrobacterium tumefaciens (strain C58)).